An 863-amino-acid chain; its full sequence is MLFSPTLSSPLTPSAVKIERENLKQFELENFSRYSIFELIENRCDFYDALLIQLWQEIELSEQLGIALIAVGGYGRREMFPLSDLDFLILVEQTPSPEIEEKITQFIQFLWDCGFEVGNSVRTLEQCESEGKQDITIATNLLEARFLAGNRPHFDALNELVKRADFWSKEDFFNAKVQEQIERYQRYHNTAYNLEPDIKYSPGGLRDLHLLYWVALRHSGALTLEAILQSGFIYPQEYQQLQESRAFLFKVRFALHLILKRYDNRLLFDRQIKVSELLGFRGEGNPAVEKMMKCFFQALHRISLISNLLIQHYRENVLPSNQDTVIDQLDDDFQLINQCLCLRNSFVFQEKPARILDLFFYLTQYEHANIHSDTLRQLQISLDQLSQKLCEIPAAREKFLRLFNQPNAIKRAFMPMHQYGVLTAYLPQWQAIEGLMQFDLFHIYTVDEHTLRVMLKLESFLSQESAQEHPIAHRIFSQLSDRTLLYIAALFHDIAKGRGGDHAELGAVDIADFAQLHGLDRREIDTLAWLVKSHLLMSITAQRRDIHDPEVVMNFAEAVQNQVRLDYLTCLTVADICATNGNLWNSWKRSLFASLYEFTGRQFSQGMKELLDYSEKSAENRKLAQQILMRDYSDITPISIEQLWARCPEDYFVRNTPKQIAWHTSLLVDFVEALLVKISNRFSLGGTEVFIYCQDQPHLFNKVVSTIGAKKFSIHDAQIITTQDGYVFDSFIITELNGELVEFDRRRELEQALTLALQSEKLPALSIVPNRQLQHFTVQTDVRFLQENKKEHTQMELVALDKAGLLAQVSQIFTELNLNLLNAKITTVGEKAEDFFILTNQFGQALDSQQREILRNVLYRNIG.

The tract at residues 1 to 328 (MLFSPTLSSP…PSNQDTVIDQ (328 aa)) is uridylyltransferase. Positions 329 to 687 (LDDDFQLINQ…ISNRFSLGGT (359 aa)) are uridylyl-removing. The region spanning 446-568 (VDEHTLRVML…VQNQVRLDYL (123 aa)) is the HD domain. ACT domains follow at residues 688-772 (EVFI…PNRQ) and 794-863 (QMEL…RNIG).

It belongs to the GlnD family. It depends on Mg(2+) as a cofactor.

It carries out the reaction [protein-PII]-L-tyrosine + UTP = [protein-PII]-uridylyl-L-tyrosine + diphosphate. The enzyme catalyses [protein-PII]-uridylyl-L-tyrosine + H2O = [protein-PII]-L-tyrosine + UMP + H(+). Uridylyltransferase (UTase) activity is inhibited by glutamine, while glutamine activates uridylyl-removing (UR) activity. Its function is as follows. Modifies, by uridylylation and deuridylylation, the PII regulatory proteins (GlnB and homologs), in response to the nitrogen status of the cell that GlnD senses through the glutamine level. Under low glutamine levels, catalyzes the conversion of the PII proteins and UTP to PII-UMP and PPi, while under higher glutamine levels, GlnD hydrolyzes PII-UMP to PII and UMP (deuridylylation). Thus, controls uridylylation state and activity of the PII proteins, and plays an important role in the regulation of nitrogen assimilation and metabolism. The sequence is that of Bifunctional uridylyltransferase/uridylyl-removing enzyme from Haemophilus influenzae (strain 86-028NP).